The following is a 71-amino-acid chain: U3-scytotoxin-Sth1h (71 aa).

Positions 1 to 33 (MSQNSITSYKMGFAKHFFLFAVLLCATAMYSVA) are cleaved as a signal peptide. Residues 34–39 (EPAQER) constitute a propeptide that is removed on maturation. Cystine bridges form between Cys-46–Cys-60, Cys-53–Cys-64, and Cys-59–Cys-69.

In terms of tissue distribution, expressed by the venom gland.

The protein resides in the secreted. In terms of biological role, probable insect neurotoxin with ion channel impairing activity. Does not show activity on 45 human receptors from 9 families (5-hydroxytryptamine, adrenergic, dopamine, muscarinic, histamine, neurotransmitter, opioid, sigma, and gaba(A) receptors). In vivo, when mixed with U3-SYTX-Sth1a does not cause paralytic or lethal activity when injected into crickets. It is noteworthy that crickets are evolutionarily distant from prey species. The polypeptide is U3-scytotoxin-Sth1h (Scytodes thoracica (Spitting spider)).